A 47-amino-acid chain; its full sequence is Defensin-like protein 1 (47 aa).

Disulfide bonds link C3–C47, C14–C36, C20–C41, and C24–C43.

It belongs to the DEFL family. Protease inhibitor I18 (RTI/MTI-2) subfamily.

The chain is Defensin-like protein 1 from Sorghum bicolor (Sorghum).